The sequence spans 248 residues: ATP synthase subunit a (248 aa).

The next 6 helical transmembrane spans lie at 25 to 45, 83 to 103, 113 to 133, 142 to 162, 192 to 212, and 215 to 235; these read IAFT…AVMM, FFPL…VGII, LIVT…YGLA, LFVP…IEVI, FIAM…LPLG, and IALT…FAIL.

Belongs to the ATPase A chain family. F-type ATPases have 2 components, CF(1) - the catalytic core - and CF(0) - the membrane proton channel. CF(1) has five subunits: alpha(3), beta(3), gamma(1), delta(1), epsilon(1). CF(0) has four main subunits: a, b, b' and c.

Its subcellular location is the cell inner membrane. Its function is as follows. Key component of the proton channel; it plays a direct role in the translocation of protons across the membrane. The polypeptide is ATP synthase subunit a (Rhodopseudomonas palustris (strain HaA2)).